The chain runs to 236 residues: Probable apoptosis inhibitor 2 (236 aa).

The BIR repeat unit spans residues Arg85 to Arg150. Cys123, Cys126, His142, and Cys146 together coordinate Zn(2+). Residues Cys189–Cys223 form an RING-type zinc finger.

In Orgyia pseudotsugata multicapsid polyhedrosis virus (OpMNPV), this protein is Probable apoptosis inhibitor 2 (IAP2).